The primary structure comprises 204 residues: Dihydroorotase (204 aa).

Residue His34 participates in Zn(2+) binding. Substrate is bound at residue Leu79. A Zn(2+)-binding site is contributed by Asp107. Asp107 is an active-site residue. The substrate site is built by His111 and Ala123.

This sequence belongs to the metallo-dependent hydrolases superfamily. DHOase family. Class II DHOase subfamily. Homodimer. The cofactor is Zn(2+).

It carries out the reaction (S)-dihydroorotate + H2O = N-carbamoyl-L-aspartate + H(+). The protein operates within pyrimidine metabolism; UMP biosynthesis via de novo pathway; (S)-dihydroorotate from bicarbonate: step 3/3. Its function is as follows. Catalyzes the reversible cyclization of carbamoyl aspartate to dihydroorotate. The polypeptide is Dihydroorotase (Serratia marcescens).